A 137-amino-acid chain; its full sequence is Small ribosomal subunit protein uS12 (137 aa).

Disordered stretches follow at residues 1–22 (MPTINQLVRKPRKSKVSKSKSP) and 35–57 (ATNNAAPQKRGVATRVGTMTPKK). A compositionally biased stretch (basic residues) spans 9–18 (RKPRKSKVSK). Asp-102 is modified (3-methylthioaspartic acid).

It belongs to the universal ribosomal protein uS12 family. In terms of assembly, part of the 30S ribosomal subunit. Contacts proteins S8 and S17. May interact with IF1 in the 30S initiation complex.

Its function is as follows. With S4 and S5 plays an important role in translational accuracy. Interacts with and stabilizes bases of the 16S rRNA that are involved in tRNA selection in the A site and with the mRNA backbone. Located at the interface of the 30S and 50S subunits, it traverses the body of the 30S subunit contacting proteins on the other side and probably holding the rRNA structure together. The combined cluster of proteins S8, S12 and S17 appears to hold together the shoulder and platform of the 30S subunit. The protein is Small ribosomal subunit protein uS12 of Leuconostoc mesenteroides subsp. mesenteroides (strain ATCC 8293 / DSM 20343 / BCRC 11652 / CCM 1803 / JCM 6124 / NCDO 523 / NBRC 100496 / NCIMB 8023 / NCTC 12954 / NRRL B-1118 / 37Y).